Reading from the N-terminus, the 231-residue chain is Protein PIMREG (231 aa).

The tract at residues 1–44 is disordered; the sequence is MASQWQGMRTSVRRRSLLKEEQLEKKEVTRSAGGHPETGPLGSL. Phosphoserine is present on residues S11 and S16. 2 short sequence motifs (D-box) span residues 14-17 and 53-56; these read RRSL and PLRA. Basic and acidic residues predominate over residues 17 to 29; that stretch reads LLKEEQLEKKEVT. The residue at position 72 (S72) is a Phosphoserine. 2 disordered regions span residues 115-138 and 152-197; these read KVRRKRGAQKDRGSPPPSLSQKNT and HLRL…DLEP. S128 is modified (phosphoserine; by Uhmk1; in vitro). The segment covering 178-190 has biased composition (polar residues); sequence PCSSTEPLCSPSE. A phosphoserine mark is found at S191 and S193.

Interacts with PICALM; this interaction may target PICALM to the nucleus. During mitosis, associates with HDAC2 and MTA2 subunits of the chromatin-remodeling NuRD complex; this association is strongest at prometaphase and decreases as the cell progresses through metaphase and anaphase. Ubiquitinated by the anaphase-promoting complex/cyclosome (APC/C) complex in the presence of FZR1, leading to its degradation by the proteasome during mitotic exit. However, degradation is not essential for normal mitotic progression within a single cell cycle. As to expression, mainly expressed in thymus and ovary. Expressed in all T-cell subpopulations isolated from the thymus, macrophages, pro-erythrocytes, granulocytes, mast cells and progenitor cells.

It localises to the nucleus. Its subcellular location is the nucleolus. During mitosis, may play a role in the metaphase-to-anaphase transition. In Mus musculus (Mouse), this protein is Protein PIMREG.